A 113-amino-acid polypeptide reads, in one-letter code: Transcriptional regulator RamA (113 aa).

The HTH araC/xylS-type domain maps to 9 to 107 (DTIVEWIDDN…NLPPGAYRKE (99 aa)). 2 DNA-binding regions (H-T-H motif) span residues 26–47 (DDIARHAGYSKWHLQRLFMQYK) and 74–97 (VYDICLKYGFDSQQTFTRIFTRTF).

In terms of biological role, transcriptional regulator. Binds to regulatory regions of target genes, including efflux pump operon acrAB and outer membrane protein gene tolC. Represses transcription of genes belonging to the flagellar regulon, including flhD, flhB and fliC; probably thereby leading to repression of motility. Represses expression of the flhDC operon in a post-transcriptional manner. Activates expression of acrAB, perhaps thereby conferring multidrug resistance. Involved in indole- and bile-mediated regulation of acrAB; binding of bile to RamA may contribute to activation of expression of acrAB. Plays a role in regulating virulence in mice. In Salmonella typhimurium (strain LT2 / SGSC1412 / ATCC 700720), this protein is Transcriptional regulator RamA.